The following is a 350-amino-acid chain: Casein kinase II subunit alpha' (350 aa).

A Protein kinase domain is found at 40–325 (YQLVRKLGRG…AKEAMEHPYF (286 aa)). Residues 46 to 54 (LGRGKYSEV) and lysine 69 contribute to the ATP site. Aspartate 157 functions as the Proton acceptor in the catalytic mechanism.

It belongs to the protein kinase superfamily. Ser/Thr protein kinase family. CK2 subfamily. In terms of assembly, tetramer composed of an alpha chain, an alpha' and two beta chains.

It carries out the reaction L-seryl-[protein] + ATP = O-phospho-L-seryl-[protein] + ADP + H(+). It catalyses the reaction L-threonyl-[protein] + ATP = O-phospho-L-threonyl-[protein] + ADP + H(+). Functionally, casein kinases are operationally defined by their preferential utilization of acidic proteins such as caseins as substrates. The alpha and alpha' chains contain the catalytic site. Participates in Wnt signaling. In Gallus gallus (Chicken), this protein is Casein kinase II subunit alpha'.